We begin with the raw amino-acid sequence, 406 residues long: Heparan sulfate glucosamine 3-O-sulfotransferase 3A1 (406 aa).

Residues 1–24 lie on the Cytoplasmic side of the membrane; sequence MAPPGPASALSTSAEPLSRSIFRK. A helical; Signal-anchor for type II membrane protein membrane pass occupies residues 25–43; the sequence is FLLMLCSLLTSLYVFYCLA. The Lumenal segment spans residues 44–406; it reads ERCQTLSGPV…MTGHDFGWDG (363 aa). Residues 92-102 show a composition bias toward basic residues; the sequence is QLPQWRRRRPP. A disordered region spans residues 92 to 134; sequence QLPQWRRRRPPAPRDDGEEAAWEEESPGLSGGPGGSGAGSTVA. Over residues 107-117 the composition is skewed to acidic residues; the sequence is DGEEAAWEEES. Residues 120–129 are compositionally biased toward gly residues; it reads LSGGPGGSGA. 162-166 is a binding site for 3'-phosphoadenylyl sulfate; the sequence is KGGTR. Substrate-binding positions include R166, 184–190, and 215–218; these read EPHFFDR and KTPS. Residues R243 and S251 each coordinate 3'-phosphoadenylyl sulfate. 255–259 contributes to the substrate binding site; that stretch reads QTLSK. Residue N273 is glycosylated (N-linked (GlcNAc...) asparagine). 283–284 serves as a coordination point for substrate; that stretch reads WS. Residue N344 is glycosylated (N-linked (GlcNAc...) asparagine). A disulfide bond links C351 and C363. 367 to 370 serves as a coordination point for substrate; it reads TKGR. 368–372 serves as a coordination point for 3'-phosphoadenylyl sulfate; it reads KGRTH.

This sequence belongs to the sulfotransferase 1 family. Ubiquitous. Most abundant in heart and placenta, followed by liver and kidney.

The protein resides in the golgi apparatus membrane. It carries out the reaction alpha-D-glucosaminyl-[heparan sulfate](n) + 3'-phosphoadenylyl sulfate = 3-sulfo-alpha-D-glucosaminyl-[heparan sulfate](n) + adenosine 3',5'-bisphosphate + H(+). Functionally, sulfotransferase that utilizes 3'-phospho-5'-adenylyl sulfate (PAPS) to catalyze the transfer of a sulfo group to an N-unsubstituted glucosamine linked to a 2-O-sulfo iduronic acid unit on heparan sulfate. Catalyzes the O-sulfation of glucosamine in IdoUA2S-GlcNS and also in IdoUA2S-GlcNH2. The substrate-specific O-sulfation generates an enzyme-modified heparan sulfate which acts as a binding receptor to Herpes simplex virus-1 (HSV-1) and permits its entry. Unlike HS3ST1/3-OST-1, does not convert non-anticoagulant heparan sulfate to anticoagulant heparan sulfate. The polypeptide is Heparan sulfate glucosamine 3-O-sulfotransferase 3A1 (HS3ST3A1) (Homo sapiens (Human)).